A 259-amino-acid polypeptide reads, in one-letter code: Acyl-[acyl-carrier-protein]--UDP-N-acetylglucosamine O-acyltransferase (259 aa).

This sequence belongs to the transferase hexapeptide repeat family. LpxA subfamily. Homotrimer.

It localises to the cytoplasm. It catalyses the reaction a (3R)-hydroxyacyl-[ACP] + UDP-N-acetyl-alpha-D-glucosamine = a UDP-3-O-[(3R)-3-hydroxyacyl]-N-acetyl-alpha-D-glucosamine + holo-[ACP]. It participates in glycolipid biosynthesis; lipid IV(A) biosynthesis; lipid IV(A) from (3R)-3-hydroxytetradecanoyl-[acyl-carrier-protein] and UDP-N-acetyl-alpha-D-glucosamine: step 1/6. Functionally, involved in the biosynthesis of lipid A, a phosphorylated glycolipid that anchors the lipopolysaccharide to the outer membrane of the cell. This Psychrobacter cryohalolentis (strain ATCC BAA-1226 / DSM 17306 / VKM B-2378 / K5) protein is Acyl-[acyl-carrier-protein]--UDP-N-acetylglucosamine O-acyltransferase.